Reading from the N-terminus, the 147-residue chain is Ribosome maturation factor RimP (147 aa).

Belongs to the RimP family.

It is found in the cytoplasm. Functionally, required for maturation of 30S ribosomal subunits. The protein is Ribosome maturation factor RimP of Legionella pneumophila (strain Lens).